A 327-amino-acid chain; its full sequence is NF-kappa-B inhibitor delta (327 aa).

The tract at residues 1 to 40 (MEDSLDTRLYPEPSLSQVGSWRVSSLPSGSPQLPSPTGPS) is disordered. Residues 14–23 (SLSQVGSWRV) show a composition bias toward polar residues. 6 ANK repeats span residues 62–97 (EGDT…IREH), 98–127 (KGKT…EPNA), 131–160 (QGRS…QVDL), 166–215 (EGLT…SHTS), 220–250 (SNKT…DLRA), and 257–290 (HGNT…DPTL). Positions 293–327 (LENEQPVHLLRPGPGPEGLRQLLKRSRTAPPGLSS) are disordered.

It belongs to the NF-kappa-B inhibitor family. As to quaternary structure, interacts with NFKB1, RELA and RELB; in the nucleus. As to expression, specifically expressed in spleen and at low levels in thymus. Expressed in a population of antigen-presenting dendritic cells which may act as regulators of systemic inflammatory response.

It is found in the nucleus. Functionally, regulates the expression of IL-2, IL-6, and other cytokines through regulation on NF-kappa-B activity. Functions in the regulation of inflammatory responses. Involved in the induction of T helper 17 cells (Th17) differentiation upon recognition of antigen by T cell antigen receptor (TCR). According to PubMed:11931770, it may also regulate TCR-induced negative selection of thymocytes. In Mus musculus (Mouse), this protein is NF-kappa-B inhibitor delta (Nfkbid).